A 254-amino-acid polypeptide reads, in one-letter code: 4-hydroxy-tetrahydrodipicolinate reductase (254 aa).

13–18 (GAAGRM) provides a ligand contact to NAD(+). Arginine 39 serves as a coordination point for NADP(+). NAD(+) contacts are provided by residues 86 to 88 (GTT) and 110 to 113 (AANT). Histidine 143 functions as the Proton donor/acceptor in the catalytic mechanism. Histidine 144 lines the (S)-2,3,4,5-tetrahydrodipicolinate pocket. Lysine 147 serves as the catalytic Proton donor. Residue 153–154 (GT) coordinates (S)-2,3,4,5-tetrahydrodipicolinate.

The protein belongs to the DapB family.

Its subcellular location is the cytoplasm. The enzyme catalyses (S)-2,3,4,5-tetrahydrodipicolinate + NAD(+) + H2O = (2S,4S)-4-hydroxy-2,3,4,5-tetrahydrodipicolinate + NADH + H(+). It catalyses the reaction (S)-2,3,4,5-tetrahydrodipicolinate + NADP(+) + H2O = (2S,4S)-4-hydroxy-2,3,4,5-tetrahydrodipicolinate + NADPH + H(+). Its pathway is amino-acid biosynthesis; L-lysine biosynthesis via DAP pathway; (S)-tetrahydrodipicolinate from L-aspartate: step 4/4. Its function is as follows. Catalyzes the conversion of 4-hydroxy-tetrahydrodipicolinate (HTPA) to tetrahydrodipicolinate. In Zymomonas mobilis subsp. mobilis (strain ATCC 31821 / ZM4 / CP4), this protein is 4-hydroxy-tetrahydrodipicolinate reductase.